The primary structure comprises 716 residues: Penicillin-binding protein 2A (716 aa).

Residues 22 to 42 (LNILFLAAFVIFTWIIVELGI) form a helical membrane-spanning segment. Ser397 (acyl-ester intermediate) is an active-site residue. Over residues 689–706 (SKQDKEGTQQKNKDKIEE) the composition is skewed to basic and acidic residues. The tract at residues 689 to 716 (SKQDKEGTQQKNKDKIEENAENTTSSDN) is disordered.

It belongs to the transpeptidase family.

The protein resides in the cell membrane. It is found in the forespore inner membrane. The catalysed reaction is Preferential cleavage: (Ac)2-L-Lys-D-Ala-|-D-Ala. Also transpeptidation of peptidyl-alanyl moieties that are N-acyl substituents of D-alanine.. It functions in the pathway cell wall biogenesis; peptidoglycan biosynthesis. Involved in the synthesis of peptidoglycan associated with cell wall elongation, especially following spore germination. Has a partially redundant function with PBP 1 (ponA) or PBP 4 (pbpD) during spore outgrowth. Plays a redundant role with PbpH in determining the rod shape of the cell during vegetative growth and spore outgrowth. The sequence is that of Penicillin-binding protein 2A from Bacillus subtilis (strain 168).